We begin with the raw amino-acid sequence, 110 residues long: uncharacterized protein (110 aa).

This is an uncharacterized protein from Saccharomyces cerevisiae (strain ATCC 204508 / S288c) (Baker's yeast).